We begin with the raw amino-acid sequence, 1002 residues long: Inversin-B (1002 aa).

ANK repeat units follow at residues 9-39 (SLASPIQAAAVTGDKTTLLRLIASSPQVIDQ), 43-72 (LGRTPLMYSVLGDRRSCAEALLKHGAKVNR), 76-105 (SGRTALHLAAQTGNHRLLKLLLSRKADCTH), 109-140 (CDITALHLSTRHQDTQCLVLLLKYTPPGQVDA), 144-173 (RKQTALHWSAYYNRPQHVRLLVRHGSNIGI), 177-209 (EGKIPLHWAAGHKDPEAALTVRCLFEAAPTESL), 216-246 (EGRTPLHLAVGDGNQEVVRLLTSYRGCNVAP), 250-279 (LFRTPLHWAALLGHTPIAHLLLERNNSPNI), 284-313 (QGATPLHYAAQGNCPDTVRVLLSHPSVRDE), 317-346 (EGRTALMWAAGKGSDEVVRTMLELNPKLEV), 352-381 (YGGTALHAASLSGQITTVRILLENRAQADA), 385-414 (MKHTPLFRACEMGHREVIATLIKGGAKVHL), 418-447 (DGRSPLHWAALGGNANVCQILIENNINPDA), 451-480 (EGRTPLQCAAYGGYIGCMEVLMENKADPNI), 484-513 (NGRTALHWSCNNGYLDAVKLLLGYNAFPNQ), and 519-549 (ERYTPLDYALLGGHQEVIQFMLEHGALSIAA). A D-box 1 motif is present at residues 486–494 (RTALHWSCN). One can recognise an IQ 1 domain in the interval 551-580 (QDIAAFKIQAVYKGHKVRRAFQERKNLLMK). 3 stretches are compositionally biased toward basic and acidic residues: residues 586–599 (KGAAAKKREGENRQ), 609–621 (KQKDADSMERQNK), and 643–656 (AEDRKGKHREENLE). Disordered stretches follow at residues 586–804 (KGAA…KGRR) and 862–886 (SAKTGQRPLTETHKPPGKACRSSSA). 2 stretches are compositionally biased toward polar residues: residues 670 to 680 (QRITAQIQSSP) and 687 to 706 (NSIQIRTSPSGTSNTQSSPL). Composition is skewed to basic and acidic residues over residues 733 to 763 (HQMESPDVVVHRIEDLIQKESRRKSHREERK) and 770 to 796 (QSSDYRLHTSEKEASDSAIHREEEGKK). The D-box 2 motif lies at 959-967 (RKQLFQRKN). The IQ 2 domain occupies 966 to 995 (KNHAATVIQKAWRTYWVRKSSCKTRHSRSQ).

Interacts with apc2. Binds calmodulin.

The protein localises to the cytoplasm. Its subcellular location is the cytoskeleton. Functionally, required for normal renal development and establishment of left-right axis. Probably acts as a molecular switch between different Wnt signaling pathways. Inhibits the canonical Wnt pathway by targeting cytoplasmic disheveled for degradation by the ubiquitin-proteasome. This suggests that it is required in renal development to oppose the repression of terminal differentiation of tubular epithelial cells by Wnt signaling. Plays a central role in convergent extension movements in gastrulating embryos, a processus regulated by Wnt signaling. The chain is Inversin-B (invs-b) from Xenopus laevis (African clawed frog).